A 209-amino-acid polypeptide reads, in one-letter code: Streptogramin A acetyltransferase (209 aa).

His-82 is a catalytic residue.

Belongs to the transferase hexapeptide repeat family. As to quaternary structure, homohexamer.

In terms of biological role, inactivates the A compounds of streptogramin antibiotics by acetylation, thus providing resistance to these antibiotics. This is Streptogramin A acetyltransferase (vatD) from Enterococcus faecium (Streptococcus faecium).